A 364-amino-acid polypeptide reads, in one-letter code: Pre-small/secreted glycoprotein (364 aa).

A signal peptide spans methionine 1 to serine 32. N-linked (GlcNAc...) asparagine; by host glycosylation occurs at asparagine 40. 2 disulfide bridges follow: cysteine 108/cysteine 135 and cysteine 121/cysteine 147. 5 N-linked (GlcNAc...) asparagine; by host glycosylation sites follow: asparagine 204, asparagine 228, asparagine 238, asparagine 257, and asparagine 268.

It belongs to the filoviruses glycoprotein family. Homodimer; disulfide-linked. The homodimers are linked by two disulfide bonds in a parallel orientation. As to quaternary structure, monomer. This precursor is processed into mature sGP and delta-peptide by host furin or furin-like proteases. The cleavage site corresponds to the furin optimal cleavage sequence [KR]-X-[KR]-R. Post-translationally, N-glycosylated. In terms of processing, O-glycosylated.

It is found in the secreted. Functionally, seems to possess an anti-inflammatory activity as it can reverse the barrier-decreasing effects of TNF alpha. Might therefore contribute to the lack of inflammatory reaction seen during infection in spite the of extensive necrosis and massive virus production. Does not seem to be involved in activation of primary macrophages. Does not seem to interact specifically with neutrophils. Viroporin that permeabilizes mammalian cell plasma membranes. It acts by altering permeation of ionic compounds and small molecules. This activity may lead to viral enterotoxic activity. This is Pre-small/secreted glycoprotein (GP) from Zaire ebolavirus (strain Eckron-76) (ZEBOV).